Here is a 279-residue protein sequence, read N- to C-terminus: Ribosomal RNA small subunit methyltransferase J (279 aa).

S-adenosyl-L-methionine is bound by residues 138 to 139 and D194; that span reads ER.

This sequence belongs to the methyltransferase superfamily. RsmJ family.

Its subcellular location is the cytoplasm. The catalysed reaction is guanosine(1516) in 16S rRNA + S-adenosyl-L-methionine = N(2)-methylguanosine(1516) in 16S rRNA + S-adenosyl-L-homocysteine + H(+). Its function is as follows. Specifically methylates the guanosine in position 1516 of 16S rRNA. The chain is Ribosomal RNA small subunit methyltransferase J from Acinetobacter baumannii (strain SDF).